Reading from the N-terminus, the 146-residue chain is Cyanate hydratase (146 aa).

Residues R87, E90, and S113 contribute to the active site.

It belongs to the cyanase family.

The catalysed reaction is cyanate + hydrogencarbonate + 3 H(+) = NH4(+) + 2 CO2. Its function is as follows. Catalyzes the reaction of cyanate with bicarbonate to produce ammonia and carbon dioxide. The sequence is that of Cyanate hydratase from Teredinibacter turnerae (strain ATCC 39867 / T7901).